Reading from the N-terminus, the 751-residue chain is ATP-dependent DNA helicase Hel308 (751 aa).

ATP contacts are provided by residues Gln-20 and 39 to 46 (IPTASGKT). Residues 26 to 196 (EGLLDKSKNF…WLNAKLVTDE (171 aa)) form the Helicase ATP-binding domain. Residues 143 to 146 (DEIH) carry the DEAH box motif. Residues 235-435 (NLTDLIVDSV…VLRVHILGLI (201 aa)) enclose the Helicase C-terminal domain.

The protein belongs to the helicase family. Hel308 subfamily. Monomer.

The catalysed reaction is Couples ATP hydrolysis with the unwinding of duplex DNA by translocating in the 3'-5' direction.. It catalyses the reaction ATP + H2O = ADP + phosphate + H(+). Its function is as follows. DNA-dependent ATPase and 3'-5' DNA helicase that may be involved in repair of stalled replication forks. The polypeptide is ATP-dependent DNA helicase Hel308 (Methanococcus vannielii (strain ATCC 35089 / DSM 1224 / JCM 13029 / OCM 148 / SB)).